We begin with the raw amino-acid sequence, 258 residues long: Axonemal dynein light intermediate polypeptide 1 (258 aa).

Disordered stretches follow at residues M1 to D60 and D202 to K231. Residues M176 to A255 are a coiled coil.

It belongs to the inner dynein arm light chain family. In terms of assembly, interacts with CFAP45. Interacts with DYNC1H1. As to expression, predominantly expressed in the testis, also detected at lower levels in several tissues expressing cilia. Strongly expressed in elongating spermatid cells (at protein level).

It localises to the cell projection. Its subcellular location is the cilium. The protein localises to the flagellum. The protein resides in the dynein axonemal particle. It is found in the cytoplasm. Functionally, involved in sperm flagellum assembly. The protein is Axonemal dynein light intermediate polypeptide 1 of Mus musculus (Mouse).